A 533-amino-acid chain; its full sequence is Nuclear receptor corepressor 1 (533 aa).

Basic and acidic residues predominate over residues K1–T17. The tract at residues K1–T21 is disordered. The short motif at I29–I33 is the CORNR box 1 element. Residues I37 to H144 form a disordered region. The span at A38–G47 shows a compositional bias: basic and acidic residues. Residues S48–S59 are compositionally biased toward low complexity. A phosphoserine mark is found at S73 and S77. The segment at P130–P209 is ID1. Positions R145 to T148 are required for interaction with RARA in the absence of its ligand. The short motif at I153–I157 is the CORNR box 2 element. Over residues Q165–S180 the composition is skewed to low complexity. Residues Q165 to E254 are disordered. A compositionally biased stretch (polar residues) spans A181 to V204. 5 positions are modified to phosphoserine: S196, S214, S230, S245, and S278. Positions L218–I236 are enriched in basic and acidic residues. An ID2 region spans residues I306–G367. Residues L357–I361 carry the CORNR box 3 motif. A compositionally biased stretch (low complexity) spans H382 to S399. The tract at residues H382–F476 is disordered. Phosphothreonine is present on T492. Phosphoserine is present on residues S529 and S531.

Belongs to the N-CoR nuclear receptor corepressors family. In terms of assembly, forms a large corepressor complex that contains SIN3A/B and histone deacetylases HDAC1 and HDAC2. This complex associates with the thyroid receptor (TR) and the retinoid acid receptor (RAR) in the absence of ligand. Interacts directly with RARA; the interaction is facilitated with RARA trimethylation. Component of the N-Cor repressor complex, at least composed of CBFA2T3, HEXIM1, NCOR1, NCOR2, HDAC3, TBL1X, TBL1XR1, CORO2A and GPS2. Interacts with ZBTB33; the interaction serves to recruit the N-CoR complex to promoter regions containing methylated CpG dinucleotides. Interacts with TRIM28 and KDM3A. Interacts (via the RD1 domain) with BAZ1A (via its N-terminal); the interaction corepresses a number of NCOR1-regulated genes. Interacts with BCL6, C1D, DACH1, HEXIM1, HDAC7, RORA, RORC, SAP30, SIAH2, SIN3A and SIN3B. May interact with DEAF1. Interacts with RXRA. Interacts with SETD5. Interacts with VDR. Interacts with ZBTB7A. Interacts with AR. Interacts with HDAC3. In terms of processing, ubiquitinated; mediated by SIAH2 and leading to its subsequent proteasomal degradation.

It is found in the nucleus. Its function is as follows. Mediates transcriptional repression by certain nuclear receptors. Part of a complex which promotes histone deacetylation and the formation of repressive chromatin structures which may impede the access of basal transcription factors. Participates in the transcriptional repressor activity produced by BCL6. Recruited by ZBTB7A to the androgen response elements/ARE on target genes, negatively regulates androgen receptor signaling and androgen-induced cell proliferation. Mediates the NR1D1-dependent repression and circadian regulation of TSHB expression. The NCOR1-HDAC3 complex regulates the circadian expression of the core clock gene ARTNL/BMAL1 and the genes involved in lipid metabolism in the liver. This Rattus norvegicus (Rat) protein is Nuclear receptor corepressor 1 (Ncor1).